Reading from the N-terminus, the 205-residue chain is High frequency lysogenization protein HflD homolog (205 aa).

This sequence belongs to the HflD family.

It is found in the cytoplasm. Its subcellular location is the cell inner membrane. The polypeptide is High frequency lysogenization protein HflD homolog (Shewanella pealeana (strain ATCC 700345 / ANG-SQ1)).